Here is a 274-residue protein sequence, read N- to C-terminus: 5-deoxy-glucuronate isomerase (274 aa).

The protein belongs to the isomerase IolB family.

The enzyme catalyses 5-deoxy-D-glucuronate = 5-dehydro-2-deoxy-D-gluconate. It participates in polyol metabolism; myo-inositol degradation into acetyl-CoA; acetyl-CoA from myo-inositol: step 4/7. Functionally, involved in the isomerization of 5-deoxy-glucuronate (5DG) to 5-dehydro-2-deoxy-D-gluconate (DKG or 2-deoxy-5-keto-D-gluconate). In Geobacillus thermodenitrificans (strain NG80-2), this protein is 5-deoxy-glucuronate isomerase.